The following is a 252-amino-acid chain: Two-component response regulator ORR2 (252 aa).

Positions 7-157 (RVLVVDDSPV…DVQRLRKCSG (151 aa)) constitute a Response regulatory domain. A 4-aspartylphosphate modification is found at Asp90.

Belongs to the ARR family. Type-A subfamily. In terms of processing, two-component system major event consists of a His-to-Asp phosphorelay between a sensor histidine kinase (HK) and a response regulator (RR). In plants, the His-to-Asp phosphorelay involves an additional intermediate named Histidine-containing phosphotransfer protein (HPt). This multistep phosphorelay consists of a His-Asp-His-Asp sequential transfer of a phosphate group between first a His and an Asp of the HK protein, followed by the transfer to a conserved His of the HPt protein and finally the transfer to an Asp in the receiver domain of the RR protein. In terms of tissue distribution, expressed in mature leaves and flowers, and at low levels in roots and shoots.

Functions as a response regulator involved in His-to-Asp phosphorelay signal transduction system. Phosphorylation of the Asp residue in the receiver domain activates the ability of the protein to promote the transcription of target genes. Type-A response regulators seem to act as negative regulators of the cytokinin signaling. The chain is Two-component response regulator ORR2 from Oryza sativa subsp. indica (Rice).